Reading from the N-terminus, the 651-residue chain is Bromodomain-containing protein 7 (651 aa).

2 disordered regions span residues glutamate 36–glutamine 133 and lysine 257–aspartate 298. The segment covering histidine 58 to glycine 69 has biased composition (basic residues). A Nuclear localization signal motif is present at residues lysine 65–histidine 96. A compositionally biased stretch (basic and acidic residues) spans glutamate 70–leucine 105. The 105-residue stretch at valine 131–glutamate 235 folds into the Bromo domain. Positions glycine 271–aspartate 298 are enriched in basic and acidic residues. Residues serine 533–lysine 564 are a coiled coil.

Its subcellular location is the nucleus. It is found in the chromosome. Acts both as coactivator and as corepressor. May play a role in chromatin remodeling. Participates in the Wnt signaling pathway. Transcriptional corepressor that down-regulates the expression of target genes. Binds to target promoters, leading to increased histone H3 acetylation. Coactivator for TP53-mediated activation of transcription of a set of target genes. Required for TP53-mediated cell-cycle arrest in response to oncogene activation. Inhibits cell cycle progression from G1 to S phase. This is Bromodomain-containing protein 7 (BRD7) from Gallus gallus (Chicken).